The primary structure comprises 110 residues: Large ribosomal subunit protein uL22 (110 aa).

It belongs to the universal ribosomal protein uL22 family. As to quaternary structure, part of the 50S ribosomal subunit.

This protein binds specifically to 23S rRNA; its binding is stimulated by other ribosomal proteins, e.g. L4, L17, and L20. It is important during the early stages of 50S assembly. It makes multiple contacts with different domains of the 23S rRNA in the assembled 50S subunit and ribosome. Functionally, the globular domain of the protein is located near the polypeptide exit tunnel on the outside of the subunit, while an extended beta-hairpin is found that lines the wall of the exit tunnel in the center of the 70S ribosome. This Marinobacter nauticus (strain ATCC 700491 / DSM 11845 / VT8) (Marinobacter aquaeolei) protein is Large ribosomal subunit protein uL22.